Consider the following 435-residue polypeptide: D-inositol 3-phosphate glycosyltransferase (435 aa).

1D-myo-inositol 3-phosphate is bound at residue histidine 16. UDP-N-acetyl-alpha-D-glucosamine contacts are provided by residues 22–23 and glycine 30; that span reads QP. 1D-myo-inositol 3-phosphate is bound by residues 27 to 32, lysine 85, tyrosine 118, threonine 142, and arginine 162; that span reads DAGGMN. Arginine 237, lysine 242, and valine 303 together coordinate UDP-N-acetyl-alpha-D-glucosamine. Mg(2+) is bound by residues tyrosine 312, arginine 313, and alanine 315. Residues glutamate 325 and glutamate 333 each coordinate UDP-N-acetyl-alpha-D-glucosamine. Mg(2+) is bound at residue threonine 339.

It belongs to the glycosyltransferase group 1 family. MshA subfamily. As to quaternary structure, homodimer.

It carries out the reaction 1D-myo-inositol 3-phosphate + UDP-N-acetyl-alpha-D-glucosamine = 1D-myo-inositol 2-acetamido-2-deoxy-alpha-D-glucopyranoside 3-phosphate + UDP + H(+). Catalyzes the transfer of a N-acetyl-glucosamine moiety to 1D-myo-inositol 3-phosphate to produce 1D-myo-inositol 2-acetamido-2-deoxy-glucopyranoside 3-phosphate in the mycothiol biosynthesis pathway. In Kineococcus radiotolerans (strain ATCC BAA-149 / DSM 14245 / SRS30216), this protein is D-inositol 3-phosphate glycosyltransferase.